An 87-amino-acid chain; its full sequence is MLKLRLTRLGDKKRPSYRIVAMEALSKRDGGAIAYLGNYFPLEDSKVVLKEEEILNYLKNGAQPTRTVKSILVKAGLWAKFEESKKK.

This sequence belongs to the bacterial ribosomal protein bS16 family.

The sequence is that of Small ribosomal subunit protein bS16 from Fusobacterium nucleatum subsp. nucleatum (strain ATCC 25586 / DSM 15643 / BCRC 10681 / CIP 101130 / JCM 8532 / KCTC 2640 / LMG 13131 / VPI 4355).